The chain runs to 260 residues: Phosphate import ATP-binding protein PstB (260 aa).

One can recognise an ABC transporter domain in the interval 14-255; the sequence is VQVKNLAFYY…PRNKQTEDYI (242 aa). ATP is bound at residue 46–53; that stretch reads GPSGCGKS.

It belongs to the ABC transporter superfamily. Phosphate importer (TC 3.A.1.7) family. The complex is composed of two ATP-binding proteins (PstB), two transmembrane proteins (PstC and PstA) and a solute-binding protein (PstS).

It localises to the cell inner membrane. The enzyme catalyses phosphate(out) + ATP + H2O = ADP + 2 phosphate(in) + H(+). Its function is as follows. Part of the ABC transporter complex PstSACB involved in phosphate import. Responsible for energy coupling to the transport system. The chain is Phosphate import ATP-binding protein PstB from Syntrophotalea carbinolica (strain DSM 2380 / NBRC 103641 / GraBd1) (Pelobacter carbinolicus).